Here is a 373-residue protein sequence, read N- to C-terminus: Zinc finger CCCH domain-containing protein 15 homolog (373 aa).

Residues 1–27 (MPPKQAQSKKTVEKEKKKKVEDKTFGL) are disordered. Residues 10-25 (KTVEKEKKKKVEDKTF) are compositionally biased toward basic and acidic residues. C3H1-type zinc fingers lie at residues 95–123 (DPKS…HDLA) and 167–205 (KPTA…HCLP). A coiled-coil region spans residues 252–326 (KEEKRLQKEK…ALANQINTSL (75 aa)). Positions 325 to 373 (SLFTDGGVLPSDDDDDDDDDDDDDEDGDDEEEDDDEEEGEYEEEEASDE) are disordered. A compositionally biased stretch (acidic residues) spans 335–373 (SDDDDDDDDDDDDDEDGDDEEEDDDEEEGEYEEEEASDE).

It belongs to the ZC3H15/TMA46 family.

This is Zinc finger CCCH domain-containing protein 15 homolog from Dictyostelium discoideum (Social amoeba).